Reading from the N-terminus, the 287-residue chain is Nucleotide-binding protein TGRD_433 (287 aa).

9 to 16 (GMSGAGKS) serves as a coordination point for ATP. Residue 60–63 (DSRA) participates in GTP binding.

The protein belongs to the RapZ-like family.

In terms of biological role, displays ATPase and GTPase activities. The chain is Nucleotide-binding protein TGRD_433 from Endomicrobium trichonymphae.